Reading from the N-terminus, the 156-residue chain is Nuclear cap-binding protein subunit 2 (156 aa).

S2 carries the post-translational modification N-acetylserine. A phosphoserine mark is found at S13 and S18. Residues Y20, Y43, 112-116 (RTDWD), 123-127 (RQYGR), and 133-134 (QV) contribute to the mRNA site. Residues 40–118 (CTLYVGNLSF…RIIRTDWDAG (79 aa)) enclose the RRM domain. Residues 124–156 (QYGRGRSGGQVRDEYRQDYDAGRGGYGKLAQNQ) form a disordered region. Basic and acidic residues predominate over residues 134-144 (VRDEYRQDYDA). The residue at position 146 (R146) is an Omega-N-methylarginine.

The protein belongs to the RRM NCBP2 family. Component of the nuclear cap-binding complex (CBC), a heterodimer composed of NCBP1/CBP80 and NCBP2/CBP20 that interacts with m7GpppG-capped RNA. Found in a U snRNA export complex with PHAX/RNUXA, NCBP1/CBP80, NCBP2/CBP20, RAN, XPO1 and m7G-capped RNA. Interacts with PHAX/RNUXA, EIF4G1, HNRNPF, HNRNPH1 and ALYREF/THOC4/ALY. Interacts with SRRT/ARS2 and KPNA3.

It localises to the nucleus. It is found in the cytoplasm. Its function is as follows. Component of the cap-binding complex (CBC), which binds co-transcriptionally to the 5' cap of pre-mRNAs and is involved in various processes such as pre-mRNA splicing, translation regulation, nonsense-mediated mRNA decay, RNA-mediated gene silencing (RNAi) by microRNAs (miRNAs) and mRNA export. The CBC complex is involved in mRNA export from the nucleus via its interaction with ALYREF/THOC4/ALY, leading to the recruitment of the mRNA export machinery to the 5' end of mRNA and to mRNA export in a 5' to 3' direction through the nuclear pore. The CBC complex is also involved in mediating U snRNA and intronless mRNAs export from the nucleus. The CBC complex is essential for a pioneer round of mRNA translation, before steady state translation when the CBC complex is replaced by cytoplasmic cap-binding protein eIF4E. The pioneer round of mRNA translation mediated by the CBC complex plays a central role in nonsense-mediated mRNA decay (NMD), NMD only taking place in mRNAs bound to the CBC complex, but not on eIF4E-bound mRNAs. The CBC complex enhances NMD in mRNAs containing at least one exon-junction complex (EJC) via its interaction with UPF1, promoting the interaction between UPF1 and UPF2. The CBC complex is also involved in 'failsafe' NMD, which is independent of the EJC complex, while it does not participate in Staufen-mediated mRNA decay (SMD). During cell proliferation, the CBC complex is also involved in microRNAs (miRNAs) biogenesis via its interaction with SRRT/ARS2, thereby being required for miRNA-mediated RNA interference. The CBC complex also acts as a negative regulator of PARN, thereby acting as an inhibitor of mRNA deadenylation. In the CBC complex, NCBP2/CBP20 recognizes and binds capped RNAs (m7GpppG-capped RNA) but requires NCBP1/CBP80 to stabilize the movement of its N-terminal loop and lock the CBC into a high affinity cap-binding state with the cap structure. The conventional cap-binding complex with NCBP2 binds both small nuclear RNA (snRNA) and messenger (mRNA) and is involved in their export from the nucleus. The sequence is that of Nuclear cap-binding protein subunit 2 (NCBP2) from Bos taurus (Bovine).